A 313-amino-acid chain; its full sequence is Acetyl-coenzyme A carboxylase carboxyl transferase subunit beta (313 aa).

A CoA carboxyltransferase N-terminal domain is found at 24-293 (LWIKCPDSGQ…LETASKSVQP (270 aa)).

This sequence belongs to the AccD/PCCB family. Acetyl-CoA carboxylase is a heterohexamer composed of biotin carboxyl carrier protein (AccB), biotin carboxylase (AccC) and two subunits each of ACCase subunit alpha (AccA) and ACCase subunit beta (AccD).

The protein localises to the cytoplasm. It carries out the reaction N(6)-carboxybiotinyl-L-lysyl-[protein] + acetyl-CoA = N(6)-biotinyl-L-lysyl-[protein] + malonyl-CoA. It participates in lipid metabolism; malonyl-CoA biosynthesis; malonyl-CoA from acetyl-CoA: step 1/1. In terms of biological role, component of the acetyl coenzyme A carboxylase (ACC) complex. Biotin carboxylase (BC) catalyzes the carboxylation of biotin on its carrier protein (BCCP) and then the CO(2) group is transferred by the transcarboxylase to acetyl-CoA to form malonyl-CoA. The polypeptide is Acetyl-coenzyme A carboxylase carboxyl transferase subunit beta (Bradyrhizobium diazoefficiens (strain JCM 10833 / BCRC 13528 / IAM 13628 / NBRC 14792 / USDA 110)).